Here is a 269-residue protein sequence, read N- to C-terminus: Mitochondrial acidic protein mam33 (269 aa).

This sequence belongs to the MAM33 family.

The protein resides in the cytoplasm. Its subcellular location is the mitochondrion matrix. This chain is Mitochondrial acidic protein mam33, found in Schizosaccharomyces pombe (strain 972 / ATCC 24843) (Fission yeast).